A 474-amino-acid polypeptide reads, in one-letter code: tRNA-2-methylthio-N(6)-dimethylallyladenosine synthase (474 aa).

In terms of domain architecture, MTTase N-terminal spans 3–120 (KKLHIKTWGC…LPEMINSVRG (118 aa)). Cys-12, Cys-49, Cys-83, Cys-157, Cys-161, and Cys-164 together coordinate [4Fe-4S] cluster. Residues 143–375 (RAEGPTAFVS…QERINQQAMA (233 aa)) enclose the Radical SAM core domain. In terms of domain architecture, TRAM spans 378–441 (RRMLGTTQRI…PNSLRGKVVR (64 aa)).

This sequence belongs to the methylthiotransferase family. MiaB subfamily. Monomer. [4Fe-4S] cluster is required as a cofactor.

The protein localises to the cytoplasm. It catalyses the reaction N(6)-dimethylallyladenosine(37) in tRNA + (sulfur carrier)-SH + AH2 + 2 S-adenosyl-L-methionine = 2-methylsulfanyl-N(6)-dimethylallyladenosine(37) in tRNA + (sulfur carrier)-H + 5'-deoxyadenosine + L-methionine + A + S-adenosyl-L-homocysteine + 2 H(+). Its function is as follows. Catalyzes the methylthiolation of N6-(dimethylallyl)adenosine (i(6)A), leading to the formation of 2-methylthio-N6-(dimethylallyl)adenosine (ms(2)i(6)A) at position 37 in tRNAs that read codons beginning with uridine. The sequence is that of tRNA-2-methylthio-N(6)-dimethylallyladenosine synthase from Shigella boydii serotype 4 (strain Sb227).